A 427-amino-acid polypeptide reads, in one-letter code: Terminal nucleotidyltransferase 5B (427 aa).

Over residues 1–11 the composition is skewed to acidic residues; it reads MMPSESGDESL. Residues 1 to 46 form a disordered region; it reads MMPSESGDESLEQPAAQVGTGAASAVATAGAAGGGPDLEASSASLG. Low complexity predominate over residues 15 to 30; it reads AAQVGTGAASAVATAG.

Belongs to the TENT family.

Its subcellular location is the cytoplasm. It localises to the nucleus. It carries out the reaction RNA(n) + ATP = RNA(n)-3'-adenine ribonucleotide + diphosphate. In terms of biological role, catalyzes the transfer of one adenosine molecule from an ATP to an mRNA poly(A) tail bearing a 3'-OH terminal group in an ATP hydrolysis-dependent manner. May be involved in maintaining the translation efficiency of at least some genes through preventing degradation of their mRNAs. Prefers RNA molecules that are adenosine-rich close to 3'-end. In addition, may inhibit cell proliferation and cell cycle progression through ubiquitination of beta-catenin/CTNNB1. The polypeptide is Terminal nucleotidyltransferase 5B (Rattus norvegicus (Rat)).